A 272-amino-acid chain; its full sequence is Cell division protein FtsQ (272 aa).

The Cytoplasmic segment spans residues 1 to 20 (MSSYAPREIPLDIRLMQGTS). The chain crosses the membrane as a helical span at residues 21 to 40 (RALFWLVALGCLFVAGHWLM). Residues 41 to 272 (QRNWWDIRAV…KTPQPAGRKD (232 aa)) lie on the Periplasmic side of the membrane. Residues 45-114 (WDIRAVRLQG…MQLAVTLQAQ (70 aa)) enclose the POTRA domain.

Belongs to the FtsQ/DivIB family. FtsQ subfamily. Part of a complex composed of FtsB, FtsL and FtsQ.

The protein localises to the cell inner membrane. Essential cell division protein. May link together the upstream cell division proteins, which are predominantly cytoplasmic, with the downstream cell division proteins, which are predominantly periplasmic. May control correct divisome assembly. This Thiomonas arsenitoxydans (strain DSM 22701 / CIP 110005 / 3As) protein is Cell division protein FtsQ.